We begin with the raw amino-acid sequence, 497 residues long: MLDLGNMSMSASVALTCCPSFLPAASGPELAKSINSPENLAGECNGKHLPMIPPEEEVKDIKIANGVTAFTRKQNPSDRVKKGFVLDDHVKDWVKRRVASGVSESTCFLPFLVGAKKMVDCLVCHKPVYPGEDLSCSVRGCQGAYHSLCAKESLGFSKSSKFKCPQHECFVCKQRTQWRCVKCPMAAHDKHSPWSKEILHLKDQPGRAVCWRHPTDWRLDTKHAVAQSEIEEVFCQLPLPYVEEEFKIDLAWKDSVVKEDPPSYVHIRRNIYLVKKKRDNANDGVGCTNCGPNCDRSCVCRVQCISCSKGCSCPESCGNRPFRKEKKIKIVKTEHCGWGVEAAESINKEDFIVEYIGEVISDAQCEQRLWDMKHKGMKDFYMCEIQKDFTIDATFKGNASRFLNHSCNPNCVLEKWQVEGETRVGVFAARQIEAGEPLTYDYRFVQFGPEVKCNCGSENCQGYLGTKRKEPNCLVVSWGAKRRRLFHRPIARKPQQD.

Residues 118 to 186 (MVDCLVCHKP…QWRCVKCPMA (69 aa)) form a PHD-type zinc finger. The AWS domain maps to 283–326 (DGVGCTNCGPNCDRSCVCRVQCISCSKGCSCPESCGNRPFRKEK). The region spanning 326–443 (KKIKIVKTEH…AGEPLTYDYR (118 aa)) is the SET domain. The region spanning 449–465 (PEVKCNCGSENCQGYLG) is the Post-SET domain.

Belongs to the class V-like SAM-binding methyltransferase superfamily. Histone-lysine methyltransferase family. SET2 subfamily. In terms of assembly, interacts with AMS/bHLH21 by its SET domain and PHD finger. Expressed in roots, flowers and buds, the anther and in stamen filaments.

It localises to the nucleus. The protein localises to the chromosome. The enzyme catalyses L-lysyl-[histone] + S-adenosyl-L-methionine = N(6)-methyl-L-lysyl-[histone] + S-adenosyl-L-homocysteine + H(+). Histone methyltransferase. Involved in stamen development. In Arabidopsis thaliana (Mouse-ear cress), this protein is Histone-lysine N-methyltransferase ASHR3 (ASHR3).